The following is a 167-amino-acid chain: Small heat shock protein C1 (167 aa).

In terms of domain architecture, sHSP spans 59–167 (SLYESNSIKS…EQEAREIVID (109 aa)).

The protein belongs to the small heat shock protein (HSP20) family.

In Rickettsia conorii (strain ATCC VR-613 / Malish 7), this protein is Small heat shock protein C1 (hspC1).